A 535-amino-acid chain; its full sequence is Probable anion transporter 2, chloroplastic (535 aa).

Residues 1–95 (MASIRSCVSV…RERAVAAMCS (95 aa)) constitute a chloroplast transit peptide. 12 consecutive transmembrane segments (helical) span residues 125 to 145 (VVAL…VMSV), 160 to 180 (FLGI…MVGG), 191 to 211 (VMAG…WAAS), 215 to 235 (IMLL…FPTM), 254 to 274 (ISMG…PIIM), 279 to 299 (LAGT…VWLF), 343 to 363 (IEMW…FVLL), 381 to 401 (AAWF…VAGA), 413 to 433 (VALV…VSLL), 443 to 463 (VAAV…AGYF), 483 to 503 (GIGT…VQWL), and 504 to 524 (GSFQ…TVFY).

It belongs to the major facilitator superfamily. Sodium/anion cotransporter (TC 2.A.1.14) family.

The protein resides in the plastid. It localises to the chloroplast membrane. Probable anion transporter. The polypeptide is Probable anion transporter 2, chloroplastic (PHT4;2) (Oryza sativa subsp. japonica (Rice)).